A 475-amino-acid chain; its full sequence is Actin-related protein 10 (475 aa).

This sequence belongs to the actin family.

Its subcellular location is the cytoplasm. It is found in the cytoskeleton. This is Actin-related protein 10 from Dictyostelium discoideum (Social amoeba).